We begin with the raw amino-acid sequence, 285 residues long: MDDSTEREQSRLTSCLKKREEMKLKECVSILPRKESPSVRSSKDGKLLAATLLLALLSCCLTVVSFYQVAALQGDLASLRAELQGHHAEKLPAGAGAPKAGLEEAPAVTAGLKIFEPPAPGEGNSSQNSRNKRAVQGPEETVTQDCLQLIADSETPTIQKGSYTFVPWLLSFKRGSALEEKENKILVKETGYFFIYGQVLYTDKTYAMGHLIQRKKVHVFGDELSLVTLFRCIQNMPETLPNNSCYSAGIAKLEEGDELQLAIPRENAQISLDGDVTFFGALKLL.

Residues 1–46 lie on the Cytoplasmic side of the membrane; sequence MDDSTEREQSRLTSCLKKREEMKLKECVSILPRKESPSVRSSKDGK. A helical; Signal-anchor for type II membrane protein membrane pass occupies residues 47 to 67; the sequence is LLAATLLLALLSCCLTVVSFY. The Extracellular segment spans residues 68-285; that stretch reads QVAALQGDLA…VTFFGALKLL (218 aa). Residues 114-138 are disordered; that stretch reads IFEPPAPGEGNSSQNSRNKRAVQGP. N-linked (GlcNAc...) asparagine glycosylation occurs at Asn-124. One can recognise a THD domain in the interval 145–284; sequence DCLQLIADSE…DVTFFGALKL (140 aa). Cysteines 232 and 245 form a disulfide. Asn-242 is a glycosylation site (N-linked (GlcNAc...) (high mannose) asparagine).

The protein belongs to the tumor necrosis factor family. Homotrimer. Isoform 2 heteromultimerizes with isoform 1, probably limiting the amount of functional isoform 1 on the cell surface. Isoform 3 is unlikely form trimers or bind to BAFF receptors. Post-translationally, the soluble form derives from the membrane form by proteolytic processing. Isoform 2 is not efficiently shed from the membrane unlike isoform 1. In terms of processing, N-glycosylated. Abundantly expressed in peripheral blood Leukocytes and is specifically expressed in monocytes and macrophages. Also found in the spleen, lymph node, bone marrow, T-cells and dendritic cells. A lower expression seen in placenta, heart, lung, fetal liver, thymus, and pancreas. Isoform 2 is expressed in many myeloid cell lines.

It localises to the cell membrane. Its subcellular location is the secreted. Functionally, cytokine that binds to TNFRSF13B/TACI and TNFRSF17/BCMA. TNFSF13/APRIL binds to the same 2 receptors. Together, they form a 2 ligands -2 receptors pathway involved in the stimulation of B- and T-cell function and the regulation of humoral immunity. A third B-cell specific BAFF-receptor (BAFFR/BR3) promotes the survival of mature B-cells and the B-cell response. Its function is as follows. Isoform 2 seems to inhibit isoform 1 secretion and bioactivity. In terms of biological role, acts as a transcription factor for its own parent gene, in association with NF-kappa-B p50 subunit, at least in autoimmune and proliferative B-cell diseases. The presence of Delta4BAFF is essential for soluble BAFF release by IFNG/IFN-gamma-stimulated monocytes and for B-cell survival. It can directly or indirectly regulate the differential expression of a large number of genes involved in the innate immune response and the regulation of apoptosis. This Homo sapiens (Human) protein is Tumor necrosis factor ligand superfamily member 13B (TNFSF13B).